The chain runs to 145 residues: Large-conductance mechanosensitive channel (145 aa).

3 consecutive transmembrane segments (helical) span residues 14–34 (VMDL…VKSL), 38–58 (LIMP…YFLP), and 81–101 (GSFL…FLMV).

The protein belongs to the MscL family. In terms of assembly, homopentamer.

The protein resides in the cell inner membrane. Functionally, channel that opens in response to stretch forces in the membrane lipid bilayer. May participate in the regulation of osmotic pressure changes within the cell. The polypeptide is Large-conductance mechanosensitive channel (Rhizobium johnstonii (strain DSM 114642 / LMG 32736 / 3841) (Rhizobium leguminosarum bv. viciae)).